We begin with the raw amino-acid sequence, 912 residues long: Tiger protein E1 (912 aa).

Positions 1–22 are cleaved as a signal peptide; that stretch reads MKLKHLTIFLFIFIYRFLFVKS. The Extracellular segment spans residues 23-815; that stretch reads DCYLINNERP…YSENKSSGFP (793 aa). N-linked (GlcNAc...) asparagine glycosylation is found at asparagine 54, asparagine 108, asparagine 164, asparagine 183, asparagine 232, asparagine 268, asparagine 323, asparagine 356, asparagine 398, asparagine 407, asparagine 568, asparagine 637, asparagine 653, asparagine 658, asparagine 706, asparagine 716, asparagine 763, asparagine 774, asparagine 781, and asparagine 809. 2 IPT/TIG domains span residues 532-609 and 612-686; these read SSDQ…GPFT and PVIE…PLII. The region spanning 715-796 is the IPT/TIG 3 domain; sequence TNTSDIDQTA…DGQYFIAQIF (82 aa). A helical transmembrane segment spans residues 816–836; it reads NEMYIGIVAIIIFLALIFFAI. Topologically, residues 837–912 are cytoplasmic; that stretch reads KTQVEKYIEE…IRCCFKEHTD (76 aa).

Its subcellular location is the cell membrane. This chain is Tiger protein E1 (tgrE1), found in Dictyostelium discoideum (Social amoeba).